Consider the following 504-residue polypeptide: Maturase K (504 aa).

This sequence belongs to the intron maturase 2 family. MatK subfamily.

It is found in the plastid. The protein localises to the chloroplast. In terms of biological role, usually encoded in the trnK tRNA gene intron. Probably assists in splicing its own and other chloroplast group II introns. The polypeptide is Maturase K (Aruncus dioicus (Goat's beard)).